We begin with the raw amino-acid sequence, 229 residues long: uncharacterized protein (229 aa).

This is an uncharacterized protein from Borreliella burgdorferi (strain ATCC 35210 / DSM 4680 / CIP 102532 / B31) (Borrelia burgdorferi).